We begin with the raw amino-acid sequence, 263 residues long: MTFAAPMSSKEARQMIRNNEWVKPTAGVANGYTQANLVVLPKELAFEFLLFCQRNPKPCPVLDVTEPGSWEPSMVAPGADLRVDLPKYRVYRNGELTEERTDIIDLWDKDMVGFLLGCSFTFEHALVNNGIPVRHIQENCNVPMYKTNIPCVKAGRFEGPMVVSMRPIPHKDVVRAVQVTSRFPSVHGAPIHIGDPKLIGIHDIYKPDFGDPVTIREGETPVFWACGVTPQAVAMEVKPDIMITHAPGHMFITDLRDEQLGVL.

Belongs to the D-glutamate cyclase family.

In Geobacillus kaustophilus (strain HTA426), this protein is Putative hydro-lyase GK2103.